The chain runs to 156 residues: Lipoprotein signal peptidase (156 aa).

3 helical membrane passes run 5 to 25, 64 to 84, and 89 to 109; these read FKFI…DQWV, YLHL…KTLL, and IAFG…FIHG. Residues D113 and D130 contribute to the active site. The chain crosses the membrane as a helical span at residues 122–142; sequence NFAIFNVADVMINISVALILI.

This sequence belongs to the peptidase A8 family.

The protein localises to the cell inner membrane. It catalyses the reaction Release of signal peptides from bacterial membrane prolipoproteins. Hydrolyzes -Xaa-Yaa-Zaa-|-(S,diacylglyceryl)Cys-, in which Xaa is hydrophobic (preferably Leu), and Yaa (Ala or Ser) and Zaa (Gly or Ala) have small, neutral side chains.. It functions in the pathway protein modification; lipoprotein biosynthesis (signal peptide cleavage). Functionally, this protein specifically catalyzes the removal of signal peptides from prolipoproteins. The sequence is that of Lipoprotein signal peptidase from Campylobacter jejuni subsp. jejuni serotype O:6 (strain 81116 / NCTC 11828).